The primary structure comprises 327 residues: Zinc transport protein ZntB (327 aa).

The Cytoplasmic portion of the chain corresponds to Met1–Met273. The chain crosses the membrane as a helical span at residues Ala274 to Ile294. At Pro295 to Arg300 the chain is on the periplasmic side. The helical transmembrane segment at Phe301–Leu321 threads the bilayer. Residues His322–Leu327 are Cytoplasmic-facing.

The protein belongs to the CorA metal ion transporter (MIT) (TC 1.A.35) family.

It is found in the cell inner membrane. It carries out the reaction Zn(2+)(out) + H(+)(out) = Zn(2+)(in) + H(+)(in). Functionally, zinc transporter. Acts as a Zn(2+):proton symporter, which likely mediates zinc ion uptake. The chain is Zinc transport protein ZntB from Salmonella agona (strain SL483).